We begin with the raw amino-acid sequence, 451 residues long: uncharacterized protein (451 aa).

The TRAM domain occupies 2–60; sequence NVVLKQRIPLKIKRMGINGEGIGFYKKTLIFVPGALKGEEVFCQISSVRRNFAEAKLLK. Positions 73, 79, 82, and 162 each coordinate [4Fe-4S] cluster. S-adenosyl-L-methionine-binding residues include Gln-283, Tyr-312, Asp-333, and Asp-381. The Nucleophile role is filled by Cys-408.

This sequence belongs to the class I-like SAM-binding methyltransferase superfamily. RNA M5U methyltransferase family.

This is an uncharacterized protein from Streptococcus agalactiae serotype III (strain NEM316).